The primary structure comprises 200 residues: Dephospho-CoA kinase (200 aa).

Residues 4–200 (TIGLTGSVAT…TFIKRFVKNK (197 aa)) enclose the DPCK domain. Residue 12-17 (ATGKST) participates in ATP binding.

The protein belongs to the CoaE family.

It is found in the cytoplasm. It catalyses the reaction 3'-dephospho-CoA + ATP = ADP + CoA + H(+). Its pathway is cofactor biosynthesis; coenzyme A biosynthesis; CoA from (R)-pantothenate: step 5/5. In terms of biological role, catalyzes the phosphorylation of the 3'-hydroxyl group of dephosphocoenzyme A to form coenzyme A. This Listeria monocytogenes serotype 4b (strain F2365) protein is Dephospho-CoA kinase.